We begin with the raw amino-acid sequence, 685 residues long: MAAASRSASGWALLLLVALWQQRAAGSGVFQLQLQEFINERGVLASGRPCEPGCRTFFRVCLKHFQAVVSPGPCTFGTVSTPVLGTNSFAVRDDSSGGGRNPLQLPFNFTWPGTFSLIIEAWHAPGDDLRPEALPPDALISKIAIQGSLAVGQNWLLDEQTSTLTRLRYSYRVICSDNYYGDNCSRLCKKRNDHFGHYVCQPDGNLSCLPGWTGEYCQQPICLSGCHEQNGYCSKPAECLCRPGWQGRLCNECIPHNGCRHGTCSTPWQCTCDEGWGGLFCDQDLNYCTHHSPCKNGATCSNSGQRSYTCTCRPGYTGVDCELELSECDSNPCRNGGSCKDQEDGYHCLCPPGYYGLHCEHSTLSCADSPCFNGGSCRERNQGANYACECPPNFTGSNCEKKVDRCTSNPCANGGQCLNRGPSRMCRCRPGFTGTYCELHVSDCARNPCAHGGTCHDLENGLMCTCPAGFSGRRCEVRTSIDACASSPCFNRATCYTDLSTDTFVCNCPYGFVGSRCEFPVGLPPSFPWVAVSLGVGLAVLLVLLGMVAVAVRQLRLRRPDDGSREAMNNLSDFQKDNLIPAAQLKNTNQKKELEVDCGLDKSNCGKQQNHTLDYNLAPGPLGRGTMPGKFPHSDKSLGEKAPLRLHSEKPECRISAICSPRDSMYQSVCLISEERNECVIATEV.

The N-terminal stretch at M1–G26 is a signal peptide. The Extracellular segment spans residues S27–W529. 2 disulfides stabilise this stretch: C50/C54 and C61/C74. 2 N-linked (GlcNAc...) asparagine glycosylation sites follow: N108 and N183. In terms of domain architecture, DSL spans V173–C217. Cysteines 175 and 184 form a disulfide. Interaction with Notch1 stretches follow at residues S185–L187 and R191–F195. C188 and C200 are oxidised to a cystine. Residue N205 is glycosylated (N-linked (GlcNAc...) asparagine). 25 disulfide bridges follow: C208–C217, C222–C233, C226–C239, C241–C250, C253–C264, C259–C270, C272–C281, C288–C300, C294–C310, C312–C321, C328–C339, C333–C348, C350–C359, C366–C377, C371–C388, C390–C399, C406–C417, C411–C426, C428–C437, C444–C455, C449–C464, C466–C475, C484–C495, C489–C506, and C508–C517. EGF-like domains lie at Q218–N251, E252–D282, D284–E322, E324–E360, S362–E400, K402–E438, H440–E476, and S480–E518. Residue N393 is glycosylated (N-linked (GlcNAc...) asparagine). Residues V530–V550 form a helical membrane-spanning segment. Residues A551–V685 lie on the Cytoplasmic side of the membrane.

In terms of assembly, interacts with NOTCH4. Interacts (via N-terminal DSL and MNNL domains) with NOTCH1 (via EGF-like domains). As to expression, expressed in vascular endothelium.

The protein resides in the cell membrane. Involved in the Notch signaling pathway as Notch ligand. Activates NOTCH1 and NOTCH4. Involved in angiogenesis; negatively regulates endothelial cell proliferation and migration and angiogenic sprouting. Essential for retinal progenitor proliferation. Required for suppressing rod fates in late retinal progenitors as well as for proper generation of other retinal cell types. During spinal cord neurogenesis, inhibits V2a interneuron fate. This is Delta-like protein 4 (DLL4) from Homo sapiens (Human).